A 229-amino-acid polypeptide reads, in one-letter code: Large ribosomal subunit protein uL1 (229 aa).

This sequence belongs to the universal ribosomal protein uL1 family. As to quaternary structure, part of the 50S ribosomal subunit.

Its function is as follows. Binds directly to 23S rRNA. The L1 stalk is quite mobile in the ribosome, and is involved in E site tRNA release. Functionally, protein L1 is also a translational repressor protein, it controls the translation of the L11 operon by binding to its mRNA. In Chlorobium luteolum (strain DSM 273 / BCRC 81028 / 2530) (Pelodictyon luteolum), this protein is Large ribosomal subunit protein uL1.